Here is a 208-residue protein sequence, read N- to C-terminus: Large ribosomal subunit protein uL3 (208 aa).

Position 149 is an N5-methylglutamine (Gln-149).

Belongs to the universal ribosomal protein uL3 family. In terms of assembly, part of the 50S ribosomal subunit. Forms a cluster with proteins L14 and L19. In terms of processing, methylated by PrmB.

In terms of biological role, one of the primary rRNA binding proteins, it binds directly near the 3'-end of the 23S rRNA, where it nucleates assembly of the 50S subunit. This chain is Large ribosomal subunit protein uL3, found in Mannheimia succiniciproducens (strain KCTC 0769BP / MBEL55E).